Here is a 726-residue protein sequence, read N- to C-terminus: Peroxisomal fatty acid beta-oxidation multifunctional protein (726 aa).

This sequence in the N-terminal section; belongs to the enoyl-CoA hydratase/isomerase family. In the central section; belongs to the 3-hydroxyacyl-CoA dehydrogenase family. As to quaternary structure, monomer.

It is found in the peroxisome. Its subcellular location is the cytoplasm. The protein localises to the cytoskeleton. It catalyses the reaction a (3S)-3-hydroxyacyl-CoA = a (2E)-enoyl-CoA + H2O. The catalysed reaction is a 4-saturated-(3S)-3-hydroxyacyl-CoA = a (3E)-enoyl-CoA + H2O. It carries out the reaction a (3Z)-enoyl-CoA = a 4-saturated (2E)-enoyl-CoA. The enzyme catalyses a (3E)-enoyl-CoA = a 4-saturated (2E)-enoyl-CoA. It catalyses the reaction (3S)-3-hydroxybutanoyl-CoA = (3R)-3-hydroxybutanoyl-CoA. The catalysed reaction is a (3S)-3-hydroxyacyl-CoA + NAD(+) = a 3-oxoacyl-CoA + NADH + H(+). The protein operates within lipid metabolism; fatty acid beta-oxidation. In terms of biological role, multifunctional enzyme involved in fatty acid beta-oxidation. Also binds to RNA and microtubules. Possible role in subcellular mRNA localization and RNA-cytoskeleton interactions. The protein is Peroxisomal fatty acid beta-oxidation multifunctional protein (MFP) of Oryza sativa subsp. japonica (Rice).